Reading from the N-terminus, the 342-residue chain is tRNA N6-adenosine threonylcarbamoyltransferase (342 aa).

Fe cation-binding residues include His-112 and His-116. Substrate contacts are provided by residues Ile-134 to Gly-138, Asp-167, Gly-180, and Asn-278. Residue Asp-306 participates in Fe cation binding.

The protein belongs to the KAE1 / TsaD family. Fe(2+) is required as a cofactor.

Its subcellular location is the cytoplasm. The enzyme catalyses L-threonylcarbamoyladenylate + adenosine(37) in tRNA = N(6)-L-threonylcarbamoyladenosine(37) in tRNA + AMP + H(+). Functionally, required for the formation of a threonylcarbamoyl group on adenosine at position 37 (t(6)A37) in tRNAs that read codons beginning with adenine. Is involved in the transfer of the threonylcarbamoyl moiety of threonylcarbamoyl-AMP (TC-AMP) to the N6 group of A37, together with TsaE and TsaB. TsaD likely plays a direct catalytic role in this reaction. The polypeptide is tRNA N6-adenosine threonylcarbamoyltransferase (Anaplasma phagocytophilum (strain HZ)).